The primary structure comprises 724 residues: Phenylalanine ammonia-lyase (724 aa).

Residue Tyr-91 is the Proton donor/acceptor of the active site. Residues 205 to 207 constitute a cross-link (5-imidazolinone (Ala-Gly)); that stretch reads ASG. At Ser-206 the chain carries 2,3-didehydroalanine (Ser). (E)-cinnamate is bound by residues Asn-265, Gln-357, Arg-363, Asn-393, Lys-467, Glu-495, and Asn-498.

The protein belongs to the PAL/histidase family. In terms of assembly, homotetramer. In terms of processing, contains an active site 4-methylidene-imidazol-5-one (MIO), which is formed autocatalytically by cyclization and dehydration of residues Ala-Ser-Gly.

It is found in the cytoplasm. It carries out the reaction L-phenylalanine = (E)-cinnamate + NH4(+). The protein operates within phenylpropanoid metabolism; trans-cinnamate biosynthesis; trans-cinnamate from L-phenylalanine: step 1/1. Its function is as follows. Catalyzes the non-oxidative deamination of L-phenylalanine to form trans-cinnamic acid and a free ammonium ion. Facilitates the commitment step in phenylpropanoid pathways that produce secondary metabolites such as lignins, coumarins and flavonoids. The sequence is that of Phenylalanine ammonia-lyase (PAL1) from Mycosarcoma maydis (Corn smut fungus).